Reading from the N-terminus, the 975-residue chain is Ionotropic receptor 21a (975 aa).

The N-terminal stretch at Met-1 to Ala-21 is a signal peptide. Asn-67, Asn-177, and Asn-355 each carry an N-linked (GlcNAc...) asparagine glycan. A helical membrane pass occupies residues Trp-433–Ser-453. N-linked (GlcNAc...) asparagine glycosylation occurs at Asn-464. The chain crosses the membrane as a helical span at residues Ile-505 to Ile-525. N-linked (GlcNAc...) asparagine glycans are attached at residues Asn-561, Asn-586, and Asn-611. The chain crosses the membrane as a helical span at residues Met-708–Val-728. Disordered regions lie at residues Ala-757 to Ser-839 and Ser-911 to Met-938. Polar residues-rich tracts occupy residues Gly-760–Asn-777 and Val-788–Ala-800. Asn-763 and Asn-797 each carry an N-linked (GlcNAc...) asparagine glycan.

Belongs to the glutamate-gated ion channel (TC 1.A.10.1) family. In terms of tissue distribution, in both female and male antenna, expressed specifically in 3 sensory neurons of flagellomere 13 segment (at protein level).

It is found in the cell projection. The protein resides in the cilium membrane. Functionally, integral part of a neural sensory system in the antenna that provides the neural basis for the response to environmental changes in temperature (thermosensation). Specifically, required for thermosensing by the cooling cell. Plays a role in heat seeking and heat-stimulated blood feeding behavior. The chain is Ionotropic receptor 21a from Anopheles gambiae (African malaria mosquito).